A 46-amino-acid polypeptide reads, in one-letter code: Protein YmiA (46 aa).

A helical membrane pass occupies residues 22 to 42; that stretch reads AWLAVFLGSALFWVVVALLIW.

It localises to the cell inner membrane. The protein is Protein YmiA (ymiA) of Escherichia coli (strain K12).